Here is a 1119-residue protein sequence, read N- to C-terminus: Transcriptional repressor NF-X1 homolog (1119 aa).

The disordered stretch occupies residues 1–214 (MADTEGTSSS…EPLTEEETKI (214 aa)). A compositionally biased stretch (low complexity) spans 7 to 17 (TSSSIPTSTNS). The segment covering 18–29 (SRHRASRGRGGR) has biased composition (basic residues). Residues 84–98 (ANFTFNPNAATFNPA) are compositionally biased toward low complexity. The span at 113 to 128 (GASTHSNQNSRQQEPS) shows a compositional bias: polar residues. Residues 143 to 154 (RQLEIQEQRGDS) are compositionally biased toward basic and acidic residues. A compositionally biased stretch (low complexity) spans 157 to 167 (QNQSRQNNRNQ). Over residues 174–193 (ANQQNKSVQNPSRNPGNSRR) the composition is skewed to polar residues. Residues 198 to 214 (RRREQKEEPLTEEETKI) are compositionally biased toward basic and acidic residues. Residues 235-287 (CAICYTRITTRQGVWSCKTCYHIFHISTGCITDWARSSRDKEGANTWRCPTCQ) form an RING-type; degenerate zinc finger. NF-X1-type zinc fingers lie at residues 330–348 (CPHP…ECKL), 383–402 (CGQH…ECTV), 439–458 (CGIH…ECET), 500–523 (CGTP…PCNL), 565–584 (CGMH…FCLQ), 592–611 (CGIH…PCLQ), 649–668 (CDHS…PCTQ), 703–726 (CGVH…KCTK), and 735–756 (CEHP…PCKA). The R3H domain occupies 867-937 (IDFVKSVEKI…KRSIVLTAVR (71 aa)). Disordered stretches follow at residues 1024–1047 (VDSD…PKDW) and 1078–1119 (AAKK…ELLE). Residues 1032-1041 (NVPTTSNLVS) are compositionally biased toward polar residues. Residues 1086-1097 (PTWEDQCDEDAP) are compositionally biased toward acidic residues.

The protein belongs to the NFX1 family.

The protein localises to the nucleus. Its function is as follows. May play a role in transcription regulation. The sequence is that of Transcriptional repressor NF-X1 homolog (nfx-1) from Caenorhabditis elegans.